Reading from the N-terminus, the 329-residue chain is Peroxidase 58 (329 aa).

A signal peptide spans 1–23 (MGLSKTIPLVLLPILMFGVLSNA). Disulfide bonds link cysteine 34–cysteine 116, cysteine 67–cysteine 72, cysteine 122–cysteine 325, and cysteine 201–cysteine 234. Asparagine 36 carries an N-linked (GlcNAc...) asparagine glycan. Histidine 65 (proton acceptor) is an active-site residue. Residues aspartate 66, valine 69, glycine 71, aspartate 73, and serine 75 each coordinate Ca(2+). Proline 164 is a substrate binding site. Residue histidine 194 participates in heme b binding. Ca(2+) is bound at residue threonine 195. Residue asparagine 210 is glycosylated (N-linked (GlcNAc...) asparagine). The Ca(2+) site is built by aspartate 247, serine 250, and aspartate 255.

This sequence belongs to the peroxidase family. Classical plant (class III) peroxidase subfamily. Heme b is required as a cofactor. Requires Ca(2+) as cofactor.

Its subcellular location is the secreted. It carries out the reaction 2 a phenolic donor + H2O2 = 2 a phenolic radical donor + 2 H2O. In terms of biological role, removal of H(2)O(2), oxidation of toxic reductants, biosynthesis and degradation of lignin, suberization, auxin catabolism, response to environmental stresses such as wounding, pathogen attack and oxidative stress. These functions might be dependent on each isozyme/isoform in each plant tissue. The protein is Peroxidase 58 (PER58) of Arabidopsis thaliana (Mouse-ear cress).